A 295-amino-acid polypeptide reads, in one-letter code: Nucleotide-binding protein llmg_1557 (295 aa).

Residue 12 to 19 (GMSGAGKT) participates in ATP binding. 63 to 66 (DMRS) lines the GTP pocket.

It belongs to the RapZ-like family.

Displays ATPase and GTPase activities. This Lactococcus lactis subsp. cremoris (strain MG1363) protein is Nucleotide-binding protein llmg_1557.